The sequence spans 417 residues: Serine hydroxymethyltransferase (417 aa).

(6S)-5,6,7,8-tetrahydrofolate contacts are provided by residues Leu-122 and 126-128; that span reads GHL. N6-(pyridoxal phosphate)lysine is present on Lys-230. 355–357 provides a ligand contact to (6S)-5,6,7,8-tetrahydrofolate; it reads SPF.

This sequence belongs to the SHMT family. In terms of assembly, homodimer. Pyridoxal 5'-phosphate serves as cofactor.

Its subcellular location is the cytoplasm. It carries out the reaction (6R)-5,10-methylene-5,6,7,8-tetrahydrofolate + glycine + H2O = (6S)-5,6,7,8-tetrahydrofolate + L-serine. The protein operates within one-carbon metabolism; tetrahydrofolate interconversion. It functions in the pathway amino-acid biosynthesis; glycine biosynthesis; glycine from L-serine: step 1/1. Functionally, catalyzes the reversible interconversion of serine and glycine with tetrahydrofolate (THF) serving as the one-carbon carrier. This reaction serves as the major source of one-carbon groups required for the biosynthesis of purines, thymidylate, methionine, and other important biomolecules. Also exhibits THF-independent aldolase activity toward beta-hydroxyamino acids, producing glycine and aldehydes, via a retro-aldol mechanism. The polypeptide is Serine hydroxymethyltransferase (Francisella tularensis subsp. holarctica (strain LVS)).